Reading from the N-terminus, the 427-residue chain is MSYSRSHQFFERARKVIPGGVNSPVRAFKAVGRQPLFIERAEGCTLVDADGNRYIDYVGSWGPMIVGHSHPKVVEAICDAAARGTSFGAPTALEIELAEQVCAAFPNMESVRMVSSGTEATMSAIRLARGVTGRDKILKFEGCYHGHADSLLVDAGSGVATFGIPASPGVPADFARHTLTAPYNDLGRVRALVEEHKADLAAIILEPIAGNMGCVPPQPGFLEGLRALCDQHEILLIIDEVMTGFRVSYGGAQQLYGVRGDLVCLGKVIGGGLPVGAFGGRQDIMRHLAPDGGVYQAGTLSGNPLAMSAGIATLKLIREEGVYEQLEQRSAYLAEGLRQAAAAAGVPACLQRVGSMFCNYFQTGPVTSFADAKASDTEAFARYFGQMLDNGVHLAPSQFEAGFVSLAHTVEDIDRTVEAAHRSLKAI.

Lys267 carries the post-translational modification N6-(pyridoxal phosphate)lysine.

The protein belongs to the class-III pyridoxal-phosphate-dependent aminotransferase family. HemL subfamily. In terms of assembly, homodimer. Pyridoxal 5'-phosphate serves as cofactor.

Its subcellular location is the cytoplasm. The enzyme catalyses (S)-4-amino-5-oxopentanoate = 5-aminolevulinate. It functions in the pathway porphyrin-containing compound metabolism; protoporphyrin-IX biosynthesis; 5-aminolevulinate from L-glutamyl-tRNA(Glu): step 2/2. This Syntrophotalea carbinolica (strain DSM 2380 / NBRC 103641 / GraBd1) (Pelobacter carbinolicus) protein is Glutamate-1-semialdehyde 2,1-aminomutase.